A 505-amino-acid chain; its full sequence is Cysteine--tRNA ligase (505 aa).

Residue cysteine 33 participates in Zn(2+) binding. Residues 35-45 (PTVYDFAHIGN) carry the 'HIGH' region motif. The Zn(2+) site is built by cysteine 229, histidine 268, and glutamate 272. A 'KMSKS' region motif is present at residues 301-305 (KMSKS). Lysine 304 contributes to the ATP binding site.

Belongs to the class-I aminoacyl-tRNA synthetase family. As to quaternary structure, monomer. The cofactor is Zn(2+).

The protein resides in the cytoplasm. It catalyses the reaction tRNA(Cys) + L-cysteine + ATP = L-cysteinyl-tRNA(Cys) + AMP + diphosphate. The chain is Cysteine--tRNA ligase from Brucella anthropi (strain ATCC 49188 / DSM 6882 / CCUG 24695 / JCM 21032 / LMG 3331 / NBRC 15819 / NCTC 12168 / Alc 37) (Ochrobactrum anthropi).